The primary structure comprises 537 residues: ATP synthase subunit beta 1 (537 aa).

G164–T171 contacts ATP. A disordered region spans residues P471–R537. Polar residues-rich tracts occupy residues Q473–P498 and I507–E528.

The protein belongs to the ATPase alpha/beta chains family. F-type ATPases have 2 components, CF(1) - the catalytic core - and CF(0) - the membrane proton channel. CF(1) has five subunits: alpha(3), beta(3), gamma(1), delta(1), epsilon(1). CF(0) has three main subunits: a(1), b(2) and c(9-12). The alpha and beta chains form an alternating ring which encloses part of the gamma chain. CF(1) is attached to CF(0) by a central stalk formed by the gamma and epsilon chains, while a peripheral stalk is formed by the delta and b chains.

The protein resides in the cell inner membrane. It catalyses the reaction ATP + H2O + 4 H(+)(in) = ADP + phosphate + 5 H(+)(out). In terms of biological role, produces ATP from ADP in the presence of a proton gradient across the membrane. The catalytic sites are hosted primarily by the beta subunits. The polypeptide is ATP synthase subunit beta 1 (Pseudoalteromonas atlantica (strain T6c / ATCC BAA-1087)).